The primary structure comprises 256 residues: uncharacterized protein (256 aa).

Positions 1–22 (MNNFRQCALCIGTSVLILLVSG) are cleaved as a signal peptide. A lipid anchor (N-palmitoyl cysteine) is attached at Cys23. The S-diacylglycerol cysteine moiety is linked to residue Cys23.

The protein belongs to the staphylococcal tandem lipoprotein family.

The protein resides in the cell membrane. This is an uncharacterized protein from Staphylococcus aureus (strain bovine RF122 / ET3-1).